Reading from the N-terminus, the 413-residue chain is Gamma-glutamyl phosphate reductase (413 aa).

The protein belongs to the gamma-glutamyl phosphate reductase family.

Its subcellular location is the cytoplasm. The catalysed reaction is L-glutamate 5-semialdehyde + phosphate + NADP(+) = L-glutamyl 5-phosphate + NADPH + H(+). Its pathway is amino-acid biosynthesis; L-proline biosynthesis; L-glutamate 5-semialdehyde from L-glutamate: step 2/2. Catalyzes the NADPH-dependent reduction of L-glutamate 5-phosphate into L-glutamate 5-semialdehyde and phosphate. The product spontaneously undergoes cyclization to form 1-pyrroline-5-carboxylate. In Lactococcus lactis subsp. cremoris (strain SK11), this protein is Gamma-glutamyl phosphate reductase.